The sequence spans 430 residues: GPI mannosyltransferase 1 (430 aa).

Topologically, residues 1 to 11 are cytoplasmic; that stretch reads MELQSLIDTVS. A helical transmembrane segment spans residues 12 to 32; the sequence is LQKLLLLGALLRLILIAYAFF. The Lumenal portion of the chain corresponds to 33–72; it reads HDQWFRVKYTDIDYMIVVDGARHMWNGGSPFDRTTFRYTP. The helical transmembrane segment at 73 to 93 threads the bilayer; it reads LLAALVMPSIWIANPMGKLIF. Over 94–115 the chain is Cytoplasmic; the sequence is ASSDLGAAWYCYGVLKSFAKER. The chain crosses the membrane as a helical span at residues 116 to 136; the sequence is SAKWMVSLFILFNPIVLSVST. Residues 137–163 are Lumenal-facing; that stretch reads RGNSDMLVTFMSLMVLSKFARRKCYQA. The helical transmembrane segment at 164–184 threads the bilayer; sequence AAVLGFAVHFKIYPIIYALPL. Residues 185-206 are Cytoplasmic-facing; the sequence is TLGVWEQSVAASTNTWRRVVKT. A helical membrane pass occupies residues 207–227; that stretch reads AVVVSICALMAAISFAVPTVL. The Lumenal portion of the chain corresponds to 228-360; the sequence is CYMKYGQQYL…AFKFFSWVKA (133 aa). A helical membrane pass occupies residues 361–381; the sequence is LGVVLMWAATIPLWVTTAVPL. The Cytoplasmic segment spans residues 382–388; that stretch reads EFHGYSD. A helical membrane pass occupies residues 389 to 409; that stretch reads FAQLWIVSCLFFLAMVVLASM. Topologically, residues 410–430 are lumenal; sequence LARIAYRVQCTKCSAKSIKVA.

The protein belongs to the PIGM family.

It is found in the endoplasmic reticulum membrane. It participates in glycolipid biosynthesis; glycosylphosphatidylinositol-anchor biosynthesis. In terms of biological role, mannosyltransferase involved in glycosylphosphatidylinositol-anchor biosynthesis. Transfers the first alpha-1,4-mannose to GlcN-PI during GPI precursor assembly. This chain is GPI mannosyltransferase 1 (PIGM), found in Trypanosoma brucei brucei (strain 927/4 GUTat10.1).